We begin with the raw amino-acid sequence, 478 residues long: Divinyl ether synthase CYP74D2 (478 aa).

Cysteine 431 contacts heme.

This sequence belongs to the cytochrome P450 family. 9-divinyl ether synthase subfamily. In terms of tissue distribution, expressed in roots.

The enzyme catalyses (9S)-hydroperoxy-(10E,12Z)-octadecadienoate = colneleate + H2O. It catalyses the reaction (9S)-hydroperoxy-(10E,12Z,15Z)-octadecatrienoate = colnelenate + H2O. Functionally, involved in the biosynthesis of the anti-fungal and antibacterial toxins colneleate and colnelenate. Can use (9S)-hydroperoxy-(10E,12Z)-octadecadienoate (9-HPOD) and (9S)-hydroperoxy-(10E,12Z,15Z)-octadecatrienoate (9-HPOT) as substrates but has no activity with the corresponding 13-hydroperoxides (13-HPOD and 13-HPOT). This Solanum tuberosum (Potato) protein is Divinyl ether synthase CYP74D2.